Consider the following 337-residue polypeptide: Cholinesterase 2 (337 aa).

Ser-99 functions as the Acyl-ester intermediate in the catalytic mechanism. Residues Cys-153 and Cys-165 are joined by a disulfide bond. Glu-224 (charge relay system) is an active-site residue. N-linked (GlcNAc...) asparagine glycosylation is present at Asn-290.

Belongs to the type-B carboxylesterase/lipase family.

The catalysed reaction is an acylcholine + H2O = a carboxylate + choline + H(+). The chain is Cholinesterase 2 (CHE2) from Branchiostoma lanceolatum (Common lancelet).